A 78-amino-acid chain; its full sequence is DNA-directed RNA polymerase subunit Rpo5 (78 aa).

It belongs to the archaeal Rpo5/eukaryotic RPB5 RNA polymerase subunit family. In terms of assembly, part of the RNA polymerase complex.

It localises to the cytoplasm. It catalyses the reaction RNA(n) + a ribonucleoside 5'-triphosphate = RNA(n+1) + diphosphate. Functionally, DNA-dependent RNA polymerase (RNAP) catalyzes the transcription of DNA into RNA using the four ribonucleoside triphosphates as substrates. This Methanosarcina mazei (strain ATCC BAA-159 / DSM 3647 / Goe1 / Go1 / JCM 11833 / OCM 88) (Methanosarcina frisia) protein is DNA-directed RNA polymerase subunit Rpo5.